Reading from the N-terminus, the 391-residue chain is Glycerol-3-phosphate dehydrogenase [NAD(+)] (391 aa).

NAD(+)-binding positions include 46–51 (GSGNWG), phenylalanine 78, and phenylalanine 134. A substrate-binding site is contributed by lysine 157. Alanine 190 contributes to the NAD(+) binding site. The active-site Proton acceptor is lysine 250. 2 residues coordinate NAD(+): arginine 315 and glutamine 344. Residue 315–316 (RN) participates in substrate binding.

This sequence belongs to the NAD-dependent glycerol-3-phosphate dehydrogenase family.

It carries out the reaction sn-glycerol 3-phosphate + NAD(+) = dihydroxyacetone phosphate + NADH + H(+). The polypeptide is Glycerol-3-phosphate dehydrogenase [NAD(+)] (GPD) (Candida tropicalis (Yeast)).